Here is a 62-residue protein sequence, read N- to C-terminus: Photosystem II reaction center protein Z (62 aa).

Helical transmembrane passes span 8–28 and 41–61; these read AVFA…VVFA and FSGT…NSLI.

This sequence belongs to the PsbZ family. As to quaternary structure, PSII is composed of 1 copy each of membrane proteins PsbA, PsbB, PsbC, PsbD, PsbE, PsbF, PsbH, PsbI, PsbJ, PsbK, PsbL, PsbM, PsbT, PsbY, PsbZ, Psb30/Ycf12, at least 3 peripheral proteins of the oxygen-evolving complex and a large number of cofactors. It forms dimeric complexes.

It localises to the plastid. The protein localises to the chloroplast thylakoid membrane. Functionally, may control the interaction of photosystem II (PSII) cores with the light-harvesting antenna, regulates electron flow through the 2 photosystem reaction centers. PSII is a light-driven water plastoquinone oxidoreductase, using light energy to abstract electrons from H(2)O, generating a proton gradient subsequently used for ATP formation. The sequence is that of Photosystem II reaction center protein Z from Daucus carota (Wild carrot).